Reading from the N-terminus, the 241-residue chain is Peroxisomal membrane protein 11C (241 aa).

The Cytoplasmic segment spans residues 1 to 124 (MASLSGLASA…ARVLHVDSSR (124 aa)). The helical transmembrane segment at 125–149 (WWTLSTTLWALSLLLGVARSLWMLL) threads the bilayer. Residues 150 to 211 (KLRQRLRSPT…GVLWAGRFPP (62 aa)) are Lumenal-facing. Residues 212–227 (WLVGLMGTISSILSMY) form a helical membrane-spanning segment. The Cytoplasmic portion of the chain corresponds to 228–241 (QAARAGGQAEATTP).

The protein belongs to the peroxin-11 family. As to quaternary structure, homodimer. Heterodimer with either PEX11A or PEX11B. Interacts with FIS1.

It is found in the peroxisome membrane. Functionally, promotes membrane protrusion and elongation on the peroxisomal surface. The sequence is that of Peroxisomal membrane protein 11C (PEX11G) from Homo sapiens (Human).